A 953-amino-acid chain; its full sequence is MITSAAGIISLLDEDEPQLKEFALHKLNAVVNDFWAEISESVDKIEVLYEDEGFRSRQFAALVASKVFYHLGAFEESLNYALGAGDLFNVNDNSEYVETIIAKCIDHYTKQCVENADLPEGEKKPIDQRLEGIVNKMFQRCLDDHKYKQAIGIALETRRLDVFEKTILESNDVPGMLAYSLKLCMSLMQNKQFRNKVLRVLVKIYMNLEKPDFINVCQCLIFLDDPQAVSDILEKLVKEDNLLMAYQICFDLYESASQQFLSSVIQNLRTVGTPIASVPGSTNTGTVPGSEKDSDSMETEEKTSSAFVGKTPEASPEPKDQTLKMIKILSGEMAIELHLQFLIRNNNTDLMILKNTKDAVRNSVCHTATVIANSFMHCGTTSDQFLRDNLEWLARATNWAKFTATASLGVIHKGHEKEALQLMATYLPKDTSPGSAYQEGGGLYALGLIHANHGGDIIDYLLNQLKNASNDIVRHGGSLGLGLAAMGTARQDVYDLLKTNLYQDDAVTGEAAGLALGLVMLGSKNAQAIEDMVGYAQETQHEKILRGLAVGIALVMYGRMEEADALIESLCRDKDPILRRSGMYTVAMAYCGSGNNKAIRRLLHVAVSDVNDDVRRAAVESLGFILFRTPEQCPSVVSLLSESYNPHVRYGAAMALGICCAGTGNKEAINLLEPMTNDPVNYVRQGALIASALIMIQQTEITCPKVNQFRQLYSKVINDKHDDVMAKFGAILAQGILDAGGHNVTISLQSRTGHTHMPSVVGVLVFTQFWFWFPLSHFLSLAYTPTCVIGLNKDLKMPKVQYKSNCKPSTFAYPAPLEVPKEKEKEKVSTAVLSITAKAKKKEKEKEKKEEEKMEVDEAEKKEEKEKKKEPEPNFQLLDNPARVMPAQLKVLTMPETCRYQPFKPLSIGGIIILKDTSEDIEELVEPVAAHGPKIEEEEQEPEPPEPFEYIDD.

Met1 carries the post-translational modification N-acetylmethionine. Phosphothreonine is present on Thr273. The disordered stretch occupies residues Pro279 to Pro318. Ser290 carries the post-translational modification Phosphoserine. Positions Ser290–Thr303 are enriched in basic and acidic residues. Lys310 carries the post-translational modification N6-acetyllysine. Position 311 is a phosphothreonine (Thr311). The residue at position 315 (Ser315) is a Phosphoserine. PC repeat units follow at residues Thr403–Ala436, Gly441–Arg474, Gly476–Glu510, Ala511–Leu545, Gly547–Arg580, Ser581–Arg616, Ala617–Arg649, Gly651–Gln685, Gly686–Ala726, and Gly729–Val761. Lys720 bears the N6-acetyllysine mark. Thr830 is modified (phosphothreonine). Ser834 is modified (phosphoserine). 2 disordered regions span residues Ala839–Pro881 and Ala930–Asp953. 2 stretches are compositionally biased toward basic and acidic residues: residues Lys842–Glu852 and Ala859–Glu872. Positions Glu936–Asp953 are enriched in acidic residues.

It belongs to the proteasome subunit S1 family. In terms of assembly, component of the 19S proteasome regulatory particle complex. The 26S proteasome consists of a 20S core particle (CP) and two 19S regulatory subunits (RP). The regulatory particle is made of a lid composed of 9 subunits, a base containing 6 ATPases and few additional components including PSMD1. Interacts with ADRM1. Interacts with ZFAND1.

Component of the 26S proteasome, a multiprotein complex involved in the ATP-dependent degradation of ubiquitinated proteins. This complex plays a key role in the maintenance of protein homeostasis by removing misfolded or damaged proteins, which could impair cellular functions, and by removing proteins whose functions are no longer required. Therefore, the proteasome participates in numerous cellular processes, including cell cycle progression, apoptosis, or DNA damage repair. This is 26S proteasome non-ATPase regulatory subunit 1 (PSMD1) from Homo sapiens (Human).